Here is an 807-residue protein sequence, read N- to C-terminus: F-box protein YLR352W (807 aa).

The 47-residue stretch at leucine 220–leucine 266 folds into the F-box domain. A compositionally biased stretch (basic and acidic residues) spans aspartate 607–glutamine 616. Disordered regions lie at residues aspartate 607–alanine 647 and histidine 716–serine 739. Polar residues-rich tracts occupy residues serine 627 to asparagine 644 and serine 723 to glutamate 736.

As to quaternary structure, interacts with SKP1 and CDC53. Component of the probable SCF(YBR352W) complex containing CDC53, SKP1, RBX1 and YBR352W.

Its pathway is protein modification; protein ubiquitination. Its function is as follows. Substrate recognition component of a SCF (SKP1-CUL1-F-box protein) E3 ubiquitin-protein ligase complex which mediates the ubiquitination and subsequent proteasomal degradation of target proteins. Probably recognizes and binds to phosphorylated target proteins. The chain is F-box protein YLR352W from Saccharomyces cerevisiae (strain ATCC 204508 / S288c) (Baker's yeast).